The sequence spans 172 residues: Acetolactate synthase small subunit (172 aa).

In terms of domain architecture, ACT spans 4–78 (TLSVLVEDEA…NILKVDNITE (75 aa)).

It belongs to the acetolactate synthase small subunit family. In terms of assembly, dimer of large and small chains.

Its subcellular location is the plastid. The protein resides in the chloroplast. It catalyses the reaction 2 pyruvate + H(+) = (2S)-2-acetolactate + CO2. The protein operates within amino-acid biosynthesis; L-isoleucine biosynthesis; L-isoleucine from 2-oxobutanoate: step 1/4. It participates in amino-acid biosynthesis; L-valine biosynthesis; L-valine from pyruvate: step 1/4. The protein is Acetolactate synthase small subunit (ilvH) of Cyanidium caldarium (Red alga).